Here is a 500-residue protein sequence, read N- to C-terminus: Proline/betaine transporter (500 aa).

Over 1–37 (MLKRKKIKPITLGDVTIIDDGKLRKAITAASLGNAME) the chain is Cytoplasmic. A helical transmembrane segment spans residues 38–58 (WFDFGVYGFVAYALGKVFFPG). Topologically, residues 59-65 (ADPSVQM) are periplasmic. A helical membrane pass occupies residues 66-86 (IAALATFSVPFLIRPLGGLFF). Residues 87–97 (GMLGDKYGRQK) lie on the Cytoplasmic side of the membrane. The helical transmembrane segment at 98 to 118 (ILAITIVIMSISTFCIGLIPS) threads the bilayer. Residues 119–121 (YAT) are Periplasmic-facing. The chain crosses the membrane as a helical span at residues 122–142 (IGIWAPILLLLCKMAQGFSVG). The Cytoplasmic portion of the chain corresponds to 143–169 (GEYTGASIFVAEYSPDRKRGFMGSWLD). A helical transmembrane segment spans residues 170–190 (FGSIAGFVLGAGVVVLISTIV). Residues 191 to 194 (GEEN) are Periplasmic-facing. Residues 195 to 215 (FLEWGWRIPFFIALPLGIIGL) form a helical membrane-spanning segment. Topologically, residues 216 to 260 (YLRHALEETPAFQQHVDKLEQGDREGLQDGPKVSFKEIATKHWRS) are cytoplasmic. The chain crosses the membrane as a helical span at residues 261 to 281 (LLSCIGLVIATNVTYYMLLTY). Residues 282 to 297 (MPSYLSHNLHYSEDHG) are Periplasmic-facing. The helical transmembrane segment at 298–318 (VLIIIAIMIGMLFVQPVMGLL) threads the bilayer. Residues 319–325 (SDRFGRR) are Cytoplasmic-facing. A helical membrane pass occupies residues 326 to 346 (PFVIMGSIALFALAIPAFILI). Over 347-350 (NSNV) the chain is Periplasmic. A helical membrane pass occupies residues 351 to 371 (IGLIFAGLLMLAVILNCFTGV). Topologically, residues 372 to 390 (MASTLPAMFPTHIRYSALA) are cytoplasmic. The helical transmembrane segment at 391-411 (AAFNISVLIAGLTPTLAAWLV) threads the bilayer. Residues 412–416 (ESSQD) are Periplasmic-facing. A helical transmembrane segment spans residues 417-437 (LMMPAYYLMVIAVIGLITGIS). The Cytoplasmic segment spans residues 438–500 (MKETANRPLK…LVQQHPRIDE (63 aa)). Residues 453 to 498 (ASDIQEAKEILGEHYDNIEQKIDDIDQEIAELQVKRSRLVQQHPRI) are a coiled coil.

This sequence belongs to the major facilitator superfamily. Metabolite:H+ Symporter (MHS) family (TC 2.A.1.6) family.

It localises to the cell inner membrane. Proton symporter that senses osmotic shifts and responds by importing osmolytes such as proline, glycine betaine, stachydrine, pipecolic acid, ectoine and taurine. It is both an osmosensor and an osmoregulator which is available to participate early in the bacterial osmoregulatory response. The polypeptide is Proline/betaine transporter (proP) (Salmonella typhimurium (strain LT2 / SGSC1412 / ATCC 700720)).